A 328-amino-acid polypeptide reads, in one-letter code: D-cysteine desulfhydrase (328 aa).

Position 51 is an N6-(pyridoxal phosphate)lysine (K51).

This sequence belongs to the ACC deaminase/D-cysteine desulfhydrase family. As to quaternary structure, homodimer. Pyridoxal 5'-phosphate is required as a cofactor.

It carries out the reaction D-cysteine + H2O = hydrogen sulfide + pyruvate + NH4(+) + H(+). Functionally, catalyzes the alpha,beta-elimination reaction of D-cysteine and of several D-cysteine derivatives. It could be a defense mechanism against D-cysteine. The protein is D-cysteine desulfhydrase of Escherichia coli (strain SMS-3-5 / SECEC).